Reading from the N-terminus, the 377-residue chain is Probable transposase for insertion sequence element IS5377 (377 aa).

This sequence belongs to the transposase 11 family.

This Geobacillus stearothermophilus (Bacillus stearothermophilus) protein is Probable transposase for insertion sequence element IS5377.